Reading from the N-terminus, the 50-residue chain is Large ribosomal subunit protein bL36B (50 aa).

Belongs to the bacterial ribosomal protein bL36 family.

In Pseudomonas aeruginosa (strain UCBPP-PA14), this protein is Large ribosomal subunit protein bL36B.